The sequence spans 199 residues: 5'-deoxynucleotidase YfbR (199 aa).

Residues 18 to 19 and His33 contribute to the substrate site; that span reads RW. One can recognise an HD domain in the interval 30–142; it reads VSEHSLQVAM…VKQADALCAY (113 aa). His33, His68, and Asp69 together coordinate a divalent metal cation. Residues Asp69, 77 to 80, and Asp137 contribute to the substrate site; that span reads DLPT. Residue Asp137 participates in a divalent metal cation binding.

This sequence belongs to the 5DNU family. As to quaternary structure, homodimer. Requires a divalent metal cation as cofactor.

Its subcellular location is the cytoplasm. The catalysed reaction is a 2'-deoxyribonucleoside 5'-phosphate + H2O = a 2'-deoxyribonucleoside + phosphate. In terms of biological role, catalyzes the strictly specific dephosphorylation of 2'-deoxyribonucleoside 5'-monophosphates. In Salmonella typhi, this protein is 5'-deoxynucleotidase YfbR.